The chain runs to 141 residues: Large ribosomal subunit protein uL16 (141 aa).

Belongs to the universal ribosomal protein uL16 family. Part of the 50S ribosomal subunit.

Binds 23S rRNA and is also seen to make contacts with the A and possibly P site tRNAs. This is Large ribosomal subunit protein uL16 from Hydrogenobaculum sp. (strain Y04AAS1).